The chain runs to 371 residues: Queuine tRNA-ribosyltransferase (371 aa).

The Proton acceptor role is filled by Asp-93. Substrate contacts are provided by residues 93–97, Asp-147, Gln-191, and Gly-218; that span reads DSGGF. An RNA binding region spans residues 249–255; sequence GVGTVVD. Asp-268 acts as the Nucleophile in catalysis. Residues 273-277 form an RNA binding; important for wobble base 34 recognition region; it reads TRNAR. The Zn(2+) site is built by Cys-306, Cys-308, Cys-311, and His-337.

Belongs to the queuine tRNA-ribosyltransferase family. In terms of assembly, homodimer. Within each dimer, one monomer is responsible for RNA recognition and catalysis, while the other monomer binds to the replacement base PreQ1. Zn(2+) serves as cofactor.

It carries out the reaction 7-aminomethyl-7-carbaguanine + guanosine(34) in tRNA = 7-aminomethyl-7-carbaguanosine(34) in tRNA + guanine. Its pathway is tRNA modification; tRNA-queuosine biosynthesis. In terms of biological role, catalyzes the base-exchange of a guanine (G) residue with the queuine precursor 7-aminomethyl-7-deazaguanine (PreQ1) at position 34 (anticodon wobble position) in tRNAs with GU(N) anticodons (tRNA-Asp, -Asn, -His and -Tyr). Catalysis occurs through a double-displacement mechanism. The nucleophile active site attacks the C1' of nucleotide 34 to detach the guanine base from the RNA, forming a covalent enzyme-RNA intermediate. The proton acceptor active site deprotonates the incoming PreQ1, allowing a nucleophilic attack on the C1' of the ribose to form the product. After dissociation, two additional enzymatic reactions on the tRNA convert PreQ1 to queuine (Q), resulting in the hypermodified nucleoside queuosine (7-(((4,5-cis-dihydroxy-2-cyclopenten-1-yl)amino)methyl)-7-deazaguanosine). The chain is Queuine tRNA-ribosyltransferase from Leptospira biflexa serovar Patoc (strain Patoc 1 / Ames).